Reading from the N-terminus, the 64-residue chain is Cytochrome c oxidase subunit 9, mitochondrial (64 aa).

At 1–15 the chain is on the mitochondrial matrix side; sequence MAATAVRPITGMLRR. A helical membrane pass occupies residues 16–36; that stretch reads GLILDIGIALGVGFVMANGYW. Residues 37 to 64 lie on the Mitochondrial intermembrane side of the membrane; the sequence is YGYHMPRTNARDNYYKKLEEERAARMGA.

The protein belongs to the fungal cytochrome c oxidase subunit 7a family. As to quaternary structure, component of the cytochrome c oxidase (complex IV, CIV), a multisubunit enzyme composed of 11 subunits. The complex is composed of a catalytic core of 3 subunits Cox1, Cox2 and Cox3, encoded in the mitochondrial DNA, and 8 supernumerary subunits Cox4, Cox5a/Cox5, Cox6, Cox7, Cox8, Cox7a/Cox9, Cox6b/Cox12 and Cox6a/Cox13, which are encoded in the nuclear genome. The complex exists as a monomer or a dimer and forms respiratory supercomplexes (SCs) in the inner mitochondrial membrane with NADH-ubiquinone oxidoreductase (complex I, CI) and ubiquinol-cytochrome c oxidoreductase (cytochrome b-c1 complex, complex III, CIII), resulting in various different assemblies (supercomplexes I(1)IV(1), I(1)III(3)IV(2), III(2)IV(1) and III(2)IV(2) as well as larger supercomplexes of compositions like I(1)III(2)IV(5-6)).

The protein localises to the mitochondrion inner membrane. It functions in the pathway energy metabolism; oxidative phosphorylation. Functionally, component of the cytochrome c oxidase, the last enzyme in the mitochondrial electron transport chain which drives oxidative phosphorylation. The respiratory chain contains 3 multisubunit complexes succinate dehydrogenase (complex II, CII), ubiquinol-cytochrome c oxidoreductase (cytochrome b-c1 complex, complex III, CIII) and cytochrome c oxidase (complex IV, CIV), that cooperate to transfer electrons derived from NADH and succinate to molecular oxygen, creating an electrochemical gradient over the inner membrane that drives transmembrane transport and the ATP synthase. Cytochrome c oxidase is the component of the respiratory chain that catalyzes the reduction of oxygen to water. Electrons originating from reduced cytochrome c in the intermembrane space (IMS) are transferred via the dinuclear copper A center (CU(A)) of Cox2 and heme A of Cox1 to the active site in Cox1, a binuclear center (BNC) formed by heme A3 and copper B (CU(B)). The BNC reduces molecular oxygen to 2 water molecules using 4 electrons from cytochrome c in the IMS and 4 protons from the mitochondrial matrix. This Neurospora crassa (strain ATCC 24698 / 74-OR23-1A / CBS 708.71 / DSM 1257 / FGSC 987) protein is Cytochrome c oxidase subunit 9, mitochondrial (cox-17).